The chain runs to 522 residues: Major facilitator-type transporter sorT (522 aa).

Positions 1-21 (MSHTEPKAPVNTGEVENGHLY) are disordered. 12 helical membrane-spanning segments follow: residues 52–72 (WFIAAIATLSVFAVTFTSSAY), 89–109 (VFIVGLSLFVLGFAIGPAVWA), 121–141 (QILWIITHIAMVAFLGGSAGS), 143–163 (NVATLLILRFFAGTFGGSPLV), 183–203 (TIYCVAPFLGPILGPIVGGFV), 211–231 (WVQGVCVIFIGVVGILGIVFI), 280–300 (WIFLFLEPIVLIASVYMAIIY), 324–344 (IGGLAFLGIAVGIIFGLVYAI), 366–386 (LPPAIVGGVALPIGMFAFAWT), 395–415 (VSIILSAPFGFGCVLVILPIM), 427–447 (ASVLAAAAIFRSVVGAVFPLF), and 457–477 (IHWASSIPAFLTLLCMPFPLI).

This sequence belongs to the major facilitator superfamily. Sugar transporter (TC 2.A.1.1) family.

It localises to the membrane. Functionally, major facilitator-type transporter; part of the gene cluster that mediates the biosynthesis of sorbicillinoids, a diverse group of yellow secondary metabolites that restrict growth of competing pathogenic fungi but not of bacteria. This chain is Major facilitator-type transporter sorT, found in Penicillium rubens (strain ATCC 28089 / DSM 1075 / NRRL 1951 / Wisconsin 54-1255) (Penicillium chrysogenum).